A 161-amino-acid chain; its full sequence is Ribosome maturation factor RimP (161 aa).

This sequence belongs to the RimP family.

It is found in the cytoplasm. In terms of biological role, required for maturation of 30S ribosomal subunits. The polypeptide is Ribosome maturation factor RimP (Rickettsia rickettsii (strain Iowa)).